Consider the following 100-residue polypeptide: Small ribosomal subunit protein uS14c (100 aa).

It belongs to the universal ribosomal protein uS14 family. In terms of assembly, part of the 30S ribosomal subunit.

The protein resides in the plastid. It localises to the chloroplast. Functionally, binds 16S rRNA, required for the assembly of 30S particles. The protein is Small ribosomal subunit protein uS14c of Ostreococcus tauri.